Reading from the N-terminus, the 545-residue chain is Propane 2-monooxygenase, hydroxylase component large subunit (545 aa).

Fe cation-binding residues include Glu-97, Glu-127, His-130, Glu-192, Glu-226, and His-229.

The protein belongs to the TmoA/XamoA family. In terms of assembly, the propane 2-monooxygenase multicomponent enzyme system is composed of an electron transfer component and a monooxygenase component interacting with the effector protein PrmD. The electron transfer component is composed of a reductase (PrmB), and the monooxygenase component is formed by a large subunit (PrmA) and a small subunit (PrmC). Probably requires the presence of the chaperonin-like protein PrmG to ensure a productive folding, resulting of a soluble PrmA, which leads to the active form of PrmABCD. Requires Fe(2+) as cofactor.

The catalysed reaction is propane + NADH + O2 + H(+) = propan-2-ol + NAD(+) + H2O. The enzyme catalyses phenol + NADH + O2 + H(+) = hydroquinone + NAD(+) + H2O. In terms of biological role, component of the propane 2-monooxygenase multicomponent enzyme system which is involved in the degradation of propane via the O2-dependent hydroxylation of propane. Under acetone induction, also able to catalyze the oxidation of phenol to yield hydroquinone. This Gordonia sp. (strain TY-5) protein is Propane 2-monooxygenase, hydroxylase component large subunit.